The sequence spans 1079 residues: DNA-directed RNA polymerase subunit beta (1079 aa).

The segment at 963–982 is disordered; sequence RSTGPYSRVTQQPVKGRARR. The span at 966-975 shows a compositional bias: polar residues; the sequence is GPYSRVTQQP.

Belongs to the RNA polymerase beta chain family. In terms of assembly, in plastids the minimal PEP RNA polymerase catalytic core is composed of four subunits: alpha, beta, beta', and beta''. When a (nuclear-encoded) sigma factor is associated with the core the holoenzyme is formed, which can initiate transcription.

It is found in the plastid. The protein localises to the chloroplast. The enzyme catalyses RNA(n) + a ribonucleoside 5'-triphosphate = RNA(n+1) + diphosphate. Functionally, DNA-dependent RNA polymerase catalyzes the transcription of DNA into RNA using the four ribonucleoside triphosphates as substrates. The sequence is that of DNA-directed RNA polymerase subunit beta from Pelargonium hortorum (Common geranium).